Consider the following 458-residue polypeptide: UDP-N-acetylmuramoylalanine--D-glutamate ligase (458 aa).

Residue 119–125 (GSNGKTT) participates in ATP binding.

It belongs to the MurCDEF family.

It localises to the cytoplasm. The enzyme catalyses UDP-N-acetyl-alpha-D-muramoyl-L-alanine + D-glutamate + ATP = UDP-N-acetyl-alpha-D-muramoyl-L-alanyl-D-glutamate + ADP + phosphate + H(+). The protein operates within cell wall biogenesis; peptidoglycan biosynthesis. Cell wall formation. Catalyzes the addition of glutamate to the nucleotide precursor UDP-N-acetylmuramoyl-L-alanine (UMA). The chain is UDP-N-acetylmuramoylalanine--D-glutamate ligase from Limosilactobacillus fermentum (strain NBRC 3956 / LMG 18251) (Lactobacillus fermentum).